The following is a 166-amino-acid chain: T-cell surface glycoprotein CD3 zeta chain (166 aa).

The N-terminal stretch at 1–21 (MKWTALVIVAVLQTQFPVTAA) is a signal peptide. Over 22 to 30 (QSFGLLDPK) the chain is Extracellular. Residues 31-51 (LCYLLDGILFIYGVIVTALFL) traverse the membrane as a helical segment. Over 52-166 (RAKFSRSADA…ALHMQALPPR (115 aa)) the chain is Cytoplasmic. Ser58 is modified (phosphoserine). ITAM domains are found at residues 61-89 (APAYQHGQNPVYNELNVGRREEYAVLDRR), 100-128 (PQRKKNPHEVVYNELRKDKMAEAYSEIGM), and 133-161 (QRRRGKGHDGVYQGLSTATKDTYDALHMQ). A phosphotyrosine mark is found at Tyr64, Tyr72, Tyr83, Tyr111, Tyr123, Tyr144, and Tyr155. A disordered region spans residues 126–156 (IGMKSDNQRRRGKGHDGVYQGLSTATKDTYD).

Belongs to the CD3Z/FCER1G family. The TCR-CD3 complex is composed of a CD3D/CD3E and a CD3G/CD3E heterodimers that preferentially associate with TCRalpha and TCRbeta, respectively, to form TCRalpha/CD3E/CD3G and TCRbeta/CD3G/CD3E trimers. In turn, the hexamer interacts with CD3Z homodimer to form the TCR-CD3 complex. Alternatively, TCRalpha and TCRbeta can be replaced by TCRgamma and TCRdelta. Interacts with SLA. Interacts with TRAT1. Interacts with DOCK2. Interacts with SLA2. Interacts with SHB. Interacts with ZAP70. Interacts (tyrosine phosphorylated) with SHC1 (via SH2 domain). Interacts with PTPRC. Interacts with CRK; this interaction regulates CD3Z phosphorylation. Interacts (on T cell side) with CD81, ICAM1 and CD9 at immunological synapses between antigen-presenting cells and T cells. Interacts with CD160. Interacts with LY6E. Interacts with LY6E. The signaling subunit of immunoglobulin gamma (IgG) Fc receptor complex. As a homodimer or a heterodimer with FCER1G, associates with the ligand binding subunit FCGR3A (via transmembrane domain); this interaction is a prerequisite for Fc receptor complex expression on the cell surface. Interacts with CD5. In terms of processing, phosphorylated on Tyr residues after T-cell receptor triggering by LCK in association with CD4/CD8.

Its subcellular location is the cell membrane. Its function is as follows. Part of the TCR-CD3 complex present on T-lymphocyte cell surface that plays an essential role in adaptive immune response. When antigen presenting cells (APCs) activate T-cell receptor (TCR), TCR-mediated signals are transmitted across the cell membrane by the CD3 chains CD3D, CD3E, CD3G and CD3Z. All CD3 chains contain immunoreceptor tyrosine-based activation motifs (ITAMs) in their cytoplasmic domain. Upon TCR engagement, these motifs become phosphorylated by Src family protein tyrosine kinases LCK and FYN, resulting in the activation of downstream signaling pathways. CD3Z ITAMs phosphorylation creates multiple docking sites for the protein kinase ZAP70 leading to ZAP70 phosphorylation and its conversion into a catalytically active enzyme. Plays an important role in intrathymic T-cell differentiation. Additionally, participates in the activity-dependent synapse formation of retinal ganglion cells (RGCs) in both the retina and dorsal lateral geniculate nucleus (dLGN). This is T-cell surface glycoprotein CD3 zeta chain (CD247) from Ovis aries (Sheep).